Consider the following 80-residue polypeptide: UPF0248 protein M1425_2629 (80 aa).

The protein belongs to the UPF0248 family.

This Saccharolobus islandicus (strain M.14.25 / Kamchatka #1) (Sulfolobus islandicus) protein is UPF0248 protein M1425_2629.